Here is an 80-residue protein sequence, read N- to C-terminus: RNA-binding protein Hfq (80 aa).

The 61-residue stretch at 9–69 (DVFLNQVRKE…ISTILPITPI (61 aa)) folds into the Sm domain.

It belongs to the Hfq family. As to quaternary structure, homohexamer.

RNA chaperone that binds small regulatory RNA (sRNAs) and mRNAs to facilitate mRNA translational regulation in response to envelope stress, environmental stress and changes in metabolite concentrations. Also binds with high specificity to tRNAs. The chain is RNA-binding protein Hfq from Alkaliphilus metalliredigens (strain QYMF).